A 250-amino-acid polypeptide reads, in one-letter code: Ubiquinone/menaquinone biosynthesis C-methyltransferase UbiE (250 aa).

S-adenosyl-L-methionine-binding positions include Thr74, Asp94, 122–123, and Ser139; that span reads DA.

It belongs to the class I-like SAM-binding methyltransferase superfamily. MenG/UbiE family.

The catalysed reaction is a 2-demethylmenaquinol + S-adenosyl-L-methionine = a menaquinol + S-adenosyl-L-homocysteine + H(+). It carries out the reaction a 2-methoxy-6-(all-trans-polyprenyl)benzene-1,4-diol + S-adenosyl-L-methionine = a 5-methoxy-2-methyl-3-(all-trans-polyprenyl)benzene-1,4-diol + S-adenosyl-L-homocysteine + H(+). It participates in quinol/quinone metabolism; menaquinone biosynthesis; menaquinol from 1,4-dihydroxy-2-naphthoate: step 2/2. It functions in the pathway cofactor biosynthesis; ubiquinone biosynthesis. Methyltransferase required for the conversion of demethylmenaquinol (DMKH2) to menaquinol (MKH2) and the conversion of 2-polyprenyl-6-methoxy-1,4-benzoquinol (DDMQH2) to 2-polyprenyl-3-methyl-6-methoxy-1,4-benzoquinol (DMQH2). The sequence is that of Ubiquinone/menaquinone biosynthesis C-methyltransferase UbiE from Cereibacter sphaeroides (strain ATCC 17029 / ATH 2.4.9) (Rhodobacter sphaeroides).